The following is a 547-amino-acid chain: CAP-Gly domain-containing linker protein 3 (547 aa).

The disordered stretch occupies residues 1–49 (MTKTDPAPMAPPPRGEEEEEEEEDEPVPEAPSPTQERRQKPVVHPSAPA). The segment covering 16–27 (EEEEEEEEDEPV) has biased composition (acidic residues). ANK repeat units follow at residues 117–158 (TDMT…LRSR), 160–191 (TNMN…VVNS), and 197–229 (NHGS…LRNR). Positions 314 to 356 (GTTEFASGQWVGVELDEPEGKNDGSVGGVRYFICPPKQGLFAS) constitute a CAP-Gly 1 domain. The disordered stretch occupies residues 365–413 (DAPPSSVTSTPRTPRMDFSRVTGKGRREHKGKKKTPSSPSLGSLQQRDG). Residues 367 to 377 (PPSSVTSTPRT) show a composition bias toward low complexity. Thr-374 bears the Phosphothreonine mark. Over residues 387 to 399 (GKGRREHKGKKKT) the composition is skewed to basic residues. Residues 400 to 410 (PSSPSLGSLQQ) show a composition bias toward polar residues. Residue Ser-401 is modified to Phosphoserine. The CAP-Gly 2 domain occupies 436 to 478 (GKTDFAPGYWYGIELDQPTGKHDGSVFGVRYFTCPPRHGVFAP). Positions 488–547 (STDSPGDSVGAKKVHQVTMTQPKRTFTTVRTPKDIASENSISRLLFCCWFPWMLRAEMQS) are goLD. Residues Cys-534 and Cys-535 are each lipidated (S-palmitoyl cysteine).

In terms of assembly, homodimer. Interacts with AKT1 and AKT2; when AKT1 and AKT2 are phosphorylated and activated, affinity is higher for AKT2. Interacts with ZDHHC13 (via ANK repeats). Interacts with ZDHHC17 (via ANK repeats). In terms of processing, palmitoylation by ZDHHC17 regulates association with the plasma membrane.

It is found in the cell membrane. The protein resides in the cytoplasm. It localises to the golgi apparatus. Its subcellular location is the golgi stack. Functionally, functions as a cytoplasmic linker protein. Involved in TGN-endosome dynamics. May modulate the cellular compartmentalization of AKT kinase family and promote its cell membrane localization, thereby playing a role in glucose transport in adipocytes. The chain is CAP-Gly domain-containing linker protein 3 (CLIP3) from Homo sapiens (Human).